A 415-amino-acid chain; its full sequence is Light-independent protochlorophyllide reductase subunit N (415 aa).

[4Fe-4S] cluster contacts are provided by Cys-16, Cys-41, and Cys-98.

Belongs to the BchN/ChlN family. Protochlorophyllide reductase is composed of three subunits; BchL, BchN and BchB. Forms a heterotetramer of two BchB and two BchN subunits. The cofactor is [4Fe-4S] cluster.

It carries out the reaction chlorophyllide a + oxidized 2[4Fe-4S]-[ferredoxin] + 2 ADP + 2 phosphate = protochlorophyllide a + reduced 2[4Fe-4S]-[ferredoxin] + 2 ATP + 2 H2O. It functions in the pathway porphyrin-containing compound metabolism; bacteriochlorophyll biosynthesis (light-independent). Functionally, component of the dark-operative protochlorophyllide reductase (DPOR) that uses Mg-ATP and reduced ferredoxin to reduce ring D of protochlorophyllide (Pchlide) to form chlorophyllide a (Chlide). This reaction is light-independent. The NB-protein (BchN-BchB) is the catalytic component of the complex. The chain is Light-independent protochlorophyllide reductase subunit N from Roseiflexus sp. (strain RS-1).